We begin with the raw amino-acid sequence, 283 residues long: Elongation factor Ts (283 aa).

Residues Thr80 to Val83 form an involved in Mg(2+) ion dislocation from EF-Tu region.

The protein belongs to the EF-Ts family.

The protein resides in the cytoplasm. In terms of biological role, associates with the EF-Tu.GDP complex and induces the exchange of GDP to GTP. It remains bound to the aminoacyl-tRNA.EF-Tu.GTP complex up to the GTP hydrolysis stage on the ribosome. This chain is Elongation factor Ts, found in Histophilus somni (strain 129Pt) (Haemophilus somnus).